Consider the following 110-residue polypeptide: Insulin (110 aa).

The N-terminal stretch at 1–24 (MALWMRLLPLLAFLILWEPSPAHA) is a signal peptide. Cystine bridges form between Cys-31–Cys-96, Cys-43–Cys-109, and Cys-95–Cys-100. The propeptide at 57–87 (GVDDPQMPQLELGGSPGAGDLRALALEVARQ) is c peptide.

The protein belongs to the insulin family. As to quaternary structure, heterodimer of a B chain and an A chain linked by two disulfide bonds.

It is found in the secreted. In terms of biological role, insulin decreases blood glucose concentration. It increases cell permeability to monosaccharides, amino acids and fatty acids. It accelerates glycolysis, the pentose phosphate cycle, and glycogen synthesis in liver. In Psammomys obesus (Fat sand rat), this protein is Insulin (INS).